Here is a 244-residue protein sequence, read N- to C-terminus: Ribosomal RNA large subunit methyltransferase E (244 aa).

The interval 1–23 is disordered; that stretch reads MATGGKKSAGRTTGSGPAGGSRN. S-adenosyl-L-methionine is bound by residues Gly-91, Trp-93, Asp-116, Asp-132, and Asp-156. Lys-196 functions as the Proton acceptor in the catalytic mechanism.

It belongs to the class I-like SAM-binding methyltransferase superfamily. RNA methyltransferase RlmE family.

It localises to the cytoplasm. The enzyme catalyses uridine(2552) in 23S rRNA + S-adenosyl-L-methionine = 2'-O-methyluridine(2552) in 23S rRNA + S-adenosyl-L-homocysteine + H(+). Specifically methylates the uridine in position 2552 of 23S rRNA at the 2'-O position of the ribose in the fully assembled 50S ribosomal subunit. The protein is Ribosomal RNA large subunit methyltransferase E of Paramagnetospirillum magneticum (strain ATCC 700264 / AMB-1) (Magnetospirillum magneticum).